The primary structure comprises 227 residues: Large ribosomal subunit protein bL25 (227 aa).

The segment at 199–227 (AIAEAQSAEAAEEKAEESAEDEKKDGEEA) is disordered. Over residues 209-227 (AEEKAEESAEDEKKDGEEA) the composition is skewed to basic and acidic residues.

Belongs to the bacterial ribosomal protein bL25 family. CTC subfamily. As to quaternary structure, part of the 50S ribosomal subunit; part of the 5S rRNA/L5/L18/L25 subcomplex. Contacts the 5S rRNA. Binds to the 5S rRNA independently of L5 and L18.

This is one of the proteins that binds to the 5S RNA in the ribosome where it forms part of the central protuberance. This chain is Large ribosomal subunit protein bL25, found in Methylobacterium radiotolerans (strain ATCC 27329 / DSM 1819 / JCM 2831 / NBRC 15690 / NCIMB 10815 / 0-1).